The following is a 284-amino-acid chain: Bifunctional protein FolD (284 aa).

NADP(+) is bound by residues 164–166 (GRS) and Ser-189.

This sequence belongs to the tetrahydrofolate dehydrogenase/cyclohydrolase family. Homodimer.

It catalyses the reaction (6R)-5,10-methylene-5,6,7,8-tetrahydrofolate + NADP(+) = (6R)-5,10-methenyltetrahydrofolate + NADPH. It carries out the reaction (6R)-5,10-methenyltetrahydrofolate + H2O = (6R)-10-formyltetrahydrofolate + H(+). It functions in the pathway one-carbon metabolism; tetrahydrofolate interconversion. Functionally, catalyzes the oxidation of 5,10-methylenetetrahydrofolate to 5,10-methenyltetrahydrofolate and then the hydrolysis of 5,10-methenyltetrahydrofolate to 10-formyltetrahydrofolate. The sequence is that of Bifunctional protein FolD from Listeria innocua serovar 6a (strain ATCC BAA-680 / CLIP 11262).